A 37-amino-acid chain; its full sequence is MIEVLLSGIVLGLIPITLAGLFVTAYLQYRRGDQLDI.

The helical transmembrane segment at 5–25 (LLSGIVLGLIPITLAGLFVTA) threads the bilayer.

The protein belongs to the PetG family. The 4 large subunits of the cytochrome b6-f complex are cytochrome b6, subunit IV (17 kDa polypeptide, PetD), cytochrome f and the Rieske protein, while the 4 small subunits are PetG, PetL, PetM and PetN. The complex functions as a dimer.

The protein resides in the plastid. It localises to the chloroplast thylakoid membrane. Functionally, component of the cytochrome b6-f complex, which mediates electron transfer between photosystem II (PSII) and photosystem I (PSI), cyclic electron flow around PSI, and state transitions. PetG is required for either the stability or assembly of the cytochrome b6-f complex. The sequence is that of Cytochrome b6-f complex subunit 5 from Cryptomeria japonica (Japanese cedar).